Reading from the N-terminus, the 80-residue chain is Metallothionein-like protein 2B (80 aa).

The protein belongs to the metallothionein superfamily. Type 15 family. Highly expressed in stems. Expressed in leaves and rachis.

Its function is as follows. Metallothioneins have a high content of cysteine residues that bind various heavy metals. The chain is Metallothionein-like protein 2B (MT2B) from Oryza sativa subsp. japonica (Rice).